Consider the following 436-residue polypeptide: Glutamate-1-semialdehyde 2,1-aminomutase (436 aa).

The residue at position 276 (Lys276) is an N6-(pyridoxal phosphate)lysine.

Belongs to the class-III pyridoxal-phosphate-dependent aminotransferase family. HemL subfamily. As to quaternary structure, homodimer. Pyridoxal 5'-phosphate serves as cofactor.

Its subcellular location is the cytoplasm. It carries out the reaction (S)-4-amino-5-oxopentanoate = 5-aminolevulinate. Its pathway is porphyrin-containing compound metabolism; protoporphyrin-IX biosynthesis; 5-aminolevulinate from L-glutamyl-tRNA(Glu): step 2/2. It participates in porphyrin-containing compound metabolism; chlorophyll biosynthesis. The polypeptide is Glutamate-1-semialdehyde 2,1-aminomutase (Synechococcus sp. (strain JA-2-3B'a(2-13)) (Cyanobacteria bacterium Yellowstone B-Prime)).